The primary structure comprises 538 residues: Myeloid cell nuclear differentiation antigen-like protein (538 aa).

The Pyrin domain occupies 1-87; that stretch reads MAEYKKIVLL…AKKLKTEKAK (87 aa). The disordered stretch occupies residues 120-306; sequence SYKSVPSSKK…PQPQNQNIPR (187 aa). Composition is skewed to basic and acidic residues over residues 135–153 and 245–262; these read AKTE…DHLP and RREE…KEPD. Positions 276–305 are enriched in low complexity; sequence SPILHSSSSASSNIPSATNQKPQPQNQNIP. Positions 299-499 constitute an HIN-200 domain; that stretch reads PQNQNIPRGA…CGDHSFVKIK (201 aa).

It belongs to the HIN-200 family. In terms of tissue distribution, highest expression observed in spleen and thymus with moderate levels in bone marrow, lung, skin and heart, low levels in muscle, liver and intestine and little or no expression in brain and pancreas.

It localises to the nucleus. Suppresses cell growth when expressed ectopically. The protein is Myeloid cell nuclear differentiation antigen-like protein of Mus musculus (Mouse).